Consider the following 483-residue polypeptide: Dihydrolipoyllysine-residue acetyltransferase component of pyruvate dehydrogenase complex, mitochondrial (483 aa).

The N-terminal 28 residues, 1–28 (MLSANMLRRMHHGVAVTRMLLVSNGKVQ), are a transit peptide targeting the mitochondrion. A Lipoyl-binding domain is found at 53–129 (HTVINMPALS…PVGKPLAVTV (77 aa)). K94 is modified (N6-lipoyllysine). 2 disordered regions span residues 143–187 (IEDS…DRVF) and 234–254 (EAAA…APGD). Basic and acidic residues predominate over residues 146–160 (SSAKEPSAKSGEEKS). A compositionally biased stretch (polar residues) spans 161 to 178 (APSSEKQSKETSSPSNVS). Positions 187–224 (FASPLARKLAEEKDLDLSQIRGSGPNGRIIKVDIENFK) constitute a Peripheral subunit-binding (PSBD) domain. The span at 235–252 (AAAKATTPAASAADAAAP) shows a compositional bias: low complexity. Catalysis depends on residues H456 and D460.

It belongs to the 2-oxoacid dehydrogenase family. (R)-lipoate serves as cofactor.

The protein resides in the mitochondrion matrix. The enzyme catalyses N(6)-[(R)-dihydrolipoyl]-L-lysyl-[protein] + acetyl-CoA = N(6)-[(R)-S(8)-acetyldihydrolipoyl]-L-lysyl-[protein] + CoA. Functionally, the pyruvate dehydrogenase complex catalyzes the overall conversion of pyruvate to acetyl-CoA and CO(2). It contains multiple copies of three enzymatic components: pyruvate dehydrogenase (E1), dihydrolipoamide acetyltransferase (E2) and lipoamide dehydrogenase (E3). The protein is Dihydrolipoyllysine-residue acetyltransferase component of pyruvate dehydrogenase complex, mitochondrial of Schizosaccharomyces pombe (strain 972 / ATCC 24843) (Fission yeast).